The sequence spans 1887 residues: Protein TIC 214 (1887 aa).

6 helical membrane-spanning segments follow: residues 18–38 (IINSVVVVGLYYGFLTTFSIG), 64–84 (FITGQLMMFISIYYAPLHLAL), 87–107 (PHTITVLALPYLLFHFFWNNH), 124–144 (LSIQCVFLNNLIFQLFNHFIL), 172–192 (VGWLIGHILFMKWLGLVLVWI), and 221–241 (IFSILLFITCVYYLGRIPSPI). Disordered stretches follow at residues 248 to 300 (EASK…EGWD), 786 to 805 (EEQTKREEKKEKDKKEDNKR), and 1569 to 1603 (LPSNKKIKNRSQETKEPPSQRERGSDIENKGNLSP). The span at 256 to 268 (VESEEERDVEIET) shows a compositional bias: acidic residues. Residues 775–816 (KEREFKILESREEQTKREEKKEKDKKEDNKRKEQARIAIEEA) adopt a coiled-coil conformation. Positions 1578–1597 (RSQETKEPPSQRERGSDIEN) are enriched in basic and acidic residues.

The protein belongs to the TIC214 family. In terms of assembly, part of the Tic complex.

It localises to the plastid. The protein resides in the chloroplast inner membrane. Involved in protein precursor import into chloroplasts. May be part of an intermediate translocation complex acting as a protein-conducting channel at the inner envelope. The protein is Protein TIC 214 of Solanum bulbocastanum (Wild potato).